Consider the following 485-residue polypeptide: GlcNAc-binding protein A (485 aa).

An N-terminal signal peptide occupies residues 1-23 (MKKQPKMTAIALILSGISGLAYG). The 178-residue stretch at 24–201 (HGYVSAVENG…SFYNVIDVKF (178 aa)) folds into the Chitin-binding type-4 domain. Residues 437–478 (AGTKVLASDGAIYQCKPWPYSGYCQQWTSNATQYQPGTGSHW) form the Chitin-binding type-3 domain.

The protein belongs to the GbpA family.

The protein resides in the secreted. Functionally, probably interacts with GlcNAc residues. May promote attachment to both epithelial cell surfaces and chitin. The protein is GlcNAc-binding protein A of Vibrio cholerae serotype O1 (strain ATCC 39541 / Classical Ogawa 395 / O395).